A 224-amino-acid polypeptide reads, in one-letter code: Cell division protein SepF (224 aa).

The interval 21 to 78 (DDYYEDDDRGPAPRGYRRPREDRFEDEGYAPRGYDGHPEDRRRDYDEPPAYRAGLAGG) is disordered. Residues 54–66 (YDGHPEDRRRDYD) are compositionally biased toward basic and acidic residues.

The protein belongs to the SepF family. As to quaternary structure, homodimer. Interacts with FtsZ.

It localises to the cytoplasm. Its function is as follows. Cell division protein that is part of the divisome complex and is recruited early to the Z-ring. Probably stimulates Z-ring formation, perhaps through the cross-linking of FtsZ protofilaments. Its function overlaps with FtsA. The chain is Cell division protein SepF from Mycolicibacterium gilvum (strain PYR-GCK) (Mycobacterium gilvum (strain PYR-GCK)).